Consider the following 416-residue polypeptide: Transcription factor PIL1 (416 aa).

Disordered regions lie at residues 1 to 24 (MEAK…NIKP), 89 to 113 (VSQS…KLKS), and 197 to 231 (ESTY…KRST). The segment covering 8–22 (SSSSEPNMISPSSNI) has biased composition (low complexity). Positions 95-124 (QQDKETNEQMNNNKKKLKSSKIEFERNVSK) form a coiled coil. A compositionally biased stretch (basic residues) spans 216 to 229 (VHARTRKPVTKRKR). Residues 229-278 (RSTEVHKLYERKRRDEFNKKMRALQDLLPNCYKDDKASLLDEAIKYMRTL) form the bHLH domain.

Homodimer. Interacts with APRR1/TOC1. Associates to PTAC12/HMR/PAP5 which acts as a transcriptional coactivator. As to expression, mainly expressed in stems, fruits and flowers and, to a lower extent, in leaves, seedlings and roots. Accumulates in etiolated seedlings.

The protein resides in the nucleus. Its function is as follows. Transcription factor. Involved in responses to transient and long-term shade. Required for the light-mediated inhibition of hypocotyl elongation. Necessary for rapid light-induced expression of the photomorphogenesis- and circadian-related gene APRR9. Seems to play a role in multiple PHYB responses, such as flowering transition and petiole elongation. The polypeptide is Transcription factor PIL1 (Arabidopsis thaliana (Mouse-ear cress)).